The following is a 201-amino-acid chain: Small ribosomal subunit protein uS5 (201 aa).

The interval 1–28 (MARGEQQRGEGGQRRDRRDRNAPEERVD) is disordered. Residues 31 to 94 (IVEKLVHINR…EEAKKTMIRV (64 aa)) enclose the S5 DRBM domain. Residues 173–201 (QIAAKRGKKVGDILGRRADGASAPEAIEG) are disordered. Basic and acidic residues predominate over residues 181–191 (KVGDILGRRAD).

It belongs to the universal ribosomal protein uS5 family. As to quaternary structure, part of the 30S ribosomal subunit. Contacts proteins S4 and S8.

In terms of biological role, with S4 and S12 plays an important role in translational accuracy. Located at the back of the 30S subunit body where it stabilizes the conformation of the head with respect to the body. The sequence is that of Small ribosomal subunit protein uS5 from Caulobacter vibrioides (strain ATCC 19089 / CIP 103742 / CB 15) (Caulobacter crescentus).